Reading from the N-terminus, the 429-residue chain is Glucose-6-phosphate isomerase (429 aa).

The active-site Proton donor is the Glu-282. Catalysis depends on residues His-303 and Lys-418.

Belongs to the GPI family.

It is found in the cytoplasm. The enzyme catalyses alpha-D-glucose 6-phosphate = beta-D-fructose 6-phosphate. It functions in the pathway carbohydrate biosynthesis; gluconeogenesis. It participates in carbohydrate degradation; glycolysis; D-glyceraldehyde 3-phosphate and glycerone phosphate from D-glucose: step 2/4. Catalyzes the reversible isomerization of glucose-6-phosphate to fructose-6-phosphate. The chain is Glucose-6-phosphate isomerase from Mesomycoplasma hyopneumoniae (strain 232) (Mycoplasma hyopneumoniae).